The primary structure comprises 250 residues: UPF0736 protein BPUM_1067 (250 aa).

The protein belongs to the UPF0736 family.

The polypeptide is UPF0736 protein BPUM_1067 (Bacillus pumilus (strain SAFR-032)).